The chain runs to 492 residues: Bifunctional purine biosynthesis protein PurH (492 aa).

One can recognise an MGS-like domain in the interval 1–144 (MKKAILSVSN…KNYKHVTTIV (144 aa)).

It belongs to the PurH family.

It carries out the reaction (6R)-10-formyltetrahydrofolate + 5-amino-1-(5-phospho-beta-D-ribosyl)imidazole-4-carboxamide = 5-formamido-1-(5-phospho-D-ribosyl)imidazole-4-carboxamide + (6S)-5,6,7,8-tetrahydrofolate. The enzyme catalyses IMP + H2O = 5-formamido-1-(5-phospho-D-ribosyl)imidazole-4-carboxamide. Its pathway is purine metabolism; IMP biosynthesis via de novo pathway; 5-formamido-1-(5-phospho-D-ribosyl)imidazole-4-carboxamide from 5-amino-1-(5-phospho-D-ribosyl)imidazole-4-carboxamide (10-formyl THF route): step 1/1. It functions in the pathway purine metabolism; IMP biosynthesis via de novo pathway; IMP from 5-formamido-1-(5-phospho-D-ribosyl)imidazole-4-carboxamide: step 1/1. The chain is Bifunctional purine biosynthesis protein PurH from Staphylococcus aureus (strain USA300).